The chain runs to 482 residues: Coagulation factor X (482 aa).

Positions 1–20 are cleaved as a signal peptide; the sequence is MESPVRLSLLYVVLASLLLP. Residues 21 to 40 constitute a propeptide that is removed on maturation; that stretch reads GRSVFINRERANNVLQRIRR. Positions 41–85 constitute a Gla domain; that stretch reads ANSFFEEIKKGNLERECVEEICSFEEAREVFEDNEKTTEFWNKYE. 4-carboxyglutamate is present on residues glutamate 46, glutamate 47, glutamate 54, glutamate 56, glutamate 59, glutamate 60, glutamate 65, glutamate 66, glutamate 69, glutamate 72, glutamate 75, and glutamate 79. A disulfide bridge connects residues cysteine 57 and cysteine 62. The EGF-like 1; calcium-binding domain maps to 86–122; it reads DGDQCESSPCQNQGECRDGLGSYTCTCTEGFEGKNCE. 11 cysteine pairs are disulfide-bonded: cysteine 90–cysteine 101, cysteine 95–cysteine 110, cysteine 112–cysteine 121, cysteine 129–cysteine 140, cysteine 136–cysteine 149, cysteine 151–cysteine 164, cysteine 172–cysteine 340, cysteine 238–cysteine 243, cysteine 259–cysteine 275, cysteine 388–cysteine 402, and cysteine 413–cysteine 441. Position 103 is a (3R)-3-hydroxyaspartate (aspartate 103). Residues 125 to 165 enclose the EGF-like 2 domain; the sequence is VRKLCSLDNGDCDQFCREEQNSVVCSCAKGYFLGNDGKSCL. The propeptide at 184–231 is activation peptide; it reads VALNTSNSEPDPEDLMPDADILYPTESPSELLNLNKTEPEANSDDVIR. N-linked (GlcNAc...) asparagine glycans are attached at residues asparagine 187 and asparagine 218. Residues 232-465 enclose the Peptidase S1 domain; the sequence is IVGGQECKRG…FLKWIDRSMK (234 aa). Residues histidine 274 and aspartate 320 each act as charge relay system in the active site. The active-site Charge relay system is the serine 417.

The protein belongs to the peptidase S1 family. As to quaternary structure, the two chains are formed from a single-chain precursor by the excision of two Arg residues and are held together by 1 or more disulfide bonds. Forms a heterodimer with SERPINA5. Interacts with ixolaris, an anticoagulant protein from Ixodes scapularis saliva. The vitamin K-dependent, enzymatic carboxylation of some glutamate residues allows the modified protein to bind calcium. Post-translationally, N- and O-glycosylated. In terms of processing, proteolytically cleaved and activated by cathepsin CTSG. The activation peptide is cleaved by factor IXa (in the intrinsic pathway), or by factor VIIa (in the extrinsic pathway). The iron and 2-oxoglutarate dependent 3-hydroxylation of aspartate and asparagine is (R) stereospecific within EGF domains. In terms of tissue distribution, plasma; synthesized in the liver.

The protein localises to the secreted. It catalyses the reaction Selective cleavage of Arg-|-Thr and then Arg-|-Ile bonds in prothrombin to form thrombin.. Inhibited by SERPINA5. Functionally, factor Xa is a vitamin K-dependent glycoprotein that converts prothrombin to thrombin in the presence of factor Va, calcium and phospholipid during blood clotting. Factor Xa activates pro-inflammatory signaling pathways in a protease-activated receptor (PAR)-dependent manner. The protein is Coagulation factor X (F10) of Rattus norvegicus (Rat).